We begin with the raw amino-acid sequence, 603 residues long: Arginine--tRNA ligase (603 aa).

Residues Pro143–His153 carry the 'HIGH' region motif.

Belongs to the class-I aminoacyl-tRNA synthetase family. As to quaternary structure, monomer.

It is found in the cytoplasm. The catalysed reaction is tRNA(Arg) + L-arginine + ATP = L-arginyl-tRNA(Arg) + AMP + diphosphate. This is Arginine--tRNA ligase from Prochlorococcus marinus (strain MIT 9303).